A 244-amino-acid polypeptide reads, in one-letter code: Leucyl/phenylalanyl-tRNA--protein transferase (244 aa).

Residues 1 to 22 (MHSQPYLLSPAPNNTPFPPAEH) form a disordered region.

This sequence belongs to the L/F-transferase family.

Its subcellular location is the cytoplasm. It catalyses the reaction N-terminal L-lysyl-[protein] + L-leucyl-tRNA(Leu) = N-terminal L-leucyl-L-lysyl-[protein] + tRNA(Leu) + H(+). The catalysed reaction is N-terminal L-arginyl-[protein] + L-leucyl-tRNA(Leu) = N-terminal L-leucyl-L-arginyl-[protein] + tRNA(Leu) + H(+). The enzyme catalyses L-phenylalanyl-tRNA(Phe) + an N-terminal L-alpha-aminoacyl-[protein] = an N-terminal L-phenylalanyl-L-alpha-aminoacyl-[protein] + tRNA(Phe). In terms of biological role, functions in the N-end rule pathway of protein degradation where it conjugates Leu, Phe and, less efficiently, Met from aminoacyl-tRNAs to the N-termini of proteins containing an N-terminal arginine or lysine. This chain is Leucyl/phenylalanyl-tRNA--protein transferase, found in Xylella fastidiosa (strain M12).